Here is a 302-residue protein sequence, read N- to C-terminus: Chloramphenicol resistance protein (302 aa).

The protein localises to the cell membrane. Its function is as follows. This protein is thought to be a membrane-associated barrier of drug uptake. This chain is Chloramphenicol resistance protein (cml), found in Escherichia coli.